The chain runs to 150 residues: Heat shock protein beta-3 (150 aa).

The sHSP domain occupies lysine 47–lysine 150.

It belongs to the small heat shock protein (HSP20) family.

The protein resides in the cytoplasm. It is found in the nucleus. Its function is as follows. Inhibitor of actin polymerization. The polypeptide is Heat shock protein beta-3 (HSPB3) (Homo sapiens (Human)).